Reading from the N-terminus, the 228-residue chain is Cytochrome c oxidase subunit 2 (228 aa).

Topologically, residues Met1–Ser14 are mitochondrial intermembrane. A helical transmembrane segment spans residues Pro15–Met45. Topologically, residues Leu46–Gln58 are mitochondrial matrix. The chain crosses the membrane as a helical span at residues Glu59 to Met86. Over Asp87–Ser228 the chain is Mitochondrial intermembrane. The Cu cation site is built by His160, Cys195, Glu197, Cys199, His203, and Met206. Residue Glu197 participates in Mg(2+) binding.

It belongs to the cytochrome c oxidase subunit 2 family. Component of the cytochrome c oxidase (complex IV, CIV), a multisubunit enzyme composed of 14 subunits. The complex is composed of a catalytic core of 3 subunits MT-CO1, MT-CO2 and MT-CO3, encoded in the mitochondrial DNA, and 11 supernumerary subunits COX4I, COX5A, COX5B, COX6A, COX6B, COX6C, COX7A, COX7B, COX7C, COX8 and NDUFA4, which are encoded in the nuclear genome. The complex exists as a monomer or a dimer and forms supercomplexes (SCs) in the inner mitochondrial membrane with NADH-ubiquinone oxidoreductase (complex I, CI) and ubiquinol-cytochrome c oxidoreductase (cytochrome b-c1 complex, complex III, CIII), resulting in different assemblies (supercomplex SCI(1)III(2)IV(1) and megacomplex MCI(2)III(2)IV(2)). Found in a complex with TMEM177, COA6, COX18, COX20, SCO1 and SCO2. Interacts with TMEM177 in a COX20-dependent manner. Interacts with COX20. Interacts with COX16. Requires Cu cation as cofactor.

It is found in the mitochondrion inner membrane. It carries out the reaction 4 Fe(II)-[cytochrome c] + O2 + 8 H(+)(in) = 4 Fe(III)-[cytochrome c] + 2 H2O + 4 H(+)(out). In terms of biological role, component of the cytochrome c oxidase, the last enzyme in the mitochondrial electron transport chain which drives oxidative phosphorylation. The respiratory chain contains 3 multisubunit complexes succinate dehydrogenase (complex II, CII), ubiquinol-cytochrome c oxidoreductase (cytochrome b-c1 complex, complex III, CIII) and cytochrome c oxidase (complex IV, CIV), that cooperate to transfer electrons derived from NADH and succinate to molecular oxygen, creating an electrochemical gradient over the inner membrane that drives transmembrane transport and the ATP synthase. Cytochrome c oxidase is the component of the respiratory chain that catalyzes the reduction of oxygen to water. Electrons originating from reduced cytochrome c in the intermembrane space (IMS) are transferred via the dinuclear copper A center (CU(A)) of subunit 2 and heme A of subunit 1 to the active site in subunit 1, a binuclear center (BNC) formed by heme A3 and copper B (CU(B)). The BNC reduces molecular oxygen to 2 water molecules using 4 electrons from cytochrome c in the IMS and 4 protons from the mitochondrial matrix. This chain is Cytochrome c oxidase subunit 2 (MT-CO2), found in Anas platyrhynchos (Mallard).